The following is a 69-amino-acid chain: Protein hunchback (69 aa).

C2H2-type zinc fingers lie at residues 1–11 (KHHLEYHLRNH), 17–39 (FKCE…LKSH), and 45–69 (YRCA…KYSH).

This sequence belongs to the hunchback C2H2-type zinc-finger protein family.

Its subcellular location is the nucleus. In terms of biological role, gap class segmentation protein that controls development of head structures. In Apis mellifera (Honeybee), this protein is Protein hunchback (hb).